The primary structure comprises 266 residues: Thymidylate synthase (266 aa).

DUMP contacts are provided by residues arginine 20 and 129 to 130 (RR). The Nucleophile role is filled by cysteine 149. Residues 169–172 (RSCD), asparagine 180, and 210–212 (HVY) each bind dUMP. Aspartate 172 is a binding site for (6R)-5,10-methylene-5,6,7,8-tetrahydrofolate. Residue alanine 265 participates in (6R)-5,10-methylene-5,6,7,8-tetrahydrofolate binding.

Belongs to the thymidylate synthase family. Bacterial-type ThyA subfamily. In terms of assembly, homodimer.

It localises to the cytoplasm. The catalysed reaction is dUMP + (6R)-5,10-methylene-5,6,7,8-tetrahydrofolate = 7,8-dihydrofolate + dTMP. Its pathway is pyrimidine metabolism; dTTP biosynthesis. Its function is as follows. Catalyzes the reductive methylation of 2'-deoxyuridine-5'-monophosphate (dUMP) to 2'-deoxythymidine-5'-monophosphate (dTMP) while utilizing 5,10-methylenetetrahydrofolate (mTHF) as the methyl donor and reductant in the reaction, yielding dihydrofolate (DHF) as a by-product. This enzymatic reaction provides an intracellular de novo source of dTMP, an essential precursor for DNA biosynthesis. This is Thymidylate synthase from Bifidobacterium longum (strain NCC 2705).